The following is a 195-amino-acid chain: Pyridoxal 5'-phosphate synthase subunit PdxT (195 aa).

Residue 55 to 57 coordinates L-glutamine; sequence GES. Cysteine 84 functions as the Nucleophile in the catalytic mechanism. L-glutamine is bound by residues arginine 111 and 139–140; that span reads IR. Catalysis depends on charge relay system residues histidine 175 and glutamate 177.

It belongs to the glutaminase PdxT/SNO family. As to quaternary structure, in the presence of PdxS, forms a dodecamer of heterodimers. Only shows activity in the heterodimer.

The catalysed reaction is aldehydo-D-ribose 5-phosphate + D-glyceraldehyde 3-phosphate + L-glutamine = pyridoxal 5'-phosphate + L-glutamate + phosphate + 3 H2O + H(+). It catalyses the reaction L-glutamine + H2O = L-glutamate + NH4(+). The protein operates within cofactor biosynthesis; pyridoxal 5'-phosphate biosynthesis. Catalyzes the hydrolysis of glutamine to glutamate and ammonia as part of the biosynthesis of pyridoxal 5'-phosphate. The resulting ammonia molecule is channeled to the active site of PdxS. In Methanosphaerula palustris (strain ATCC BAA-1556 / DSM 19958 / E1-9c), this protein is Pyridoxal 5'-phosphate synthase subunit PdxT.